We begin with the raw amino-acid sequence, 466 residues long: Light-independent protochlorophyllide reductase subunit N (466 aa).

Residues Cys-24, Cys-49, and Cys-109 each coordinate [4Fe-4S] cluster.

It belongs to the BchN/ChlN family. Protochlorophyllide reductase is composed of three subunits; ChlL, ChlN and ChlB. Forms a heterotetramer of two ChlB and two ChlN subunits. It depends on [4Fe-4S] cluster as a cofactor.

The catalysed reaction is chlorophyllide a + oxidized 2[4Fe-4S]-[ferredoxin] + 2 ADP + 2 phosphate = protochlorophyllide a + reduced 2[4Fe-4S]-[ferredoxin] + 2 ATP + 2 H2O. The protein operates within porphyrin-containing compound metabolism; chlorophyll biosynthesis (light-independent). In terms of biological role, component of the dark-operative protochlorophyllide reductase (DPOR) that uses Mg-ATP and reduced ferredoxin to reduce ring D of protochlorophyllide (Pchlide) to form chlorophyllide a (Chlide). This reaction is light-independent. The NB-protein (ChlN-ChlB) is the catalytic component of the complex. The polypeptide is Light-independent protochlorophyllide reductase subunit N (Synechococcus sp. (strain JA-3-3Ab) (Cyanobacteria bacterium Yellowstone A-Prime)).